The sequence spans 173 residues: DELTA-actitoxin-Oor1b (173 aa).

The N-terminal region stretch occupies residues 6 to 25 (GAALGFNVHQTVLKALGQVS). Phosphocholine is bound by residues Ser49, Val82, Ser100, Pro102, Tyr128, and Tyr133. The segment at 100 to 115 (SVPFDYNLYSNWWDVK) is trp-rich region, which is important for the binding to lipid membrane.

The protein belongs to the actinoporin family. Sea anemone subfamily. As to quaternary structure, octamer or nonamer in membranes. Monomer in the soluble state.

The protein resides in the secreted. It localises to the nematocyst. Its subcellular location is the target cell membrane. Pore-forming protein that forms cations-selective hydrophilic pores of around 1 nm and causes cardiac stimulation and cytolysis. Pore formation is a multi-step process that involves specific recognition of membrane sphingomyelin (but neither cholesterol nor phosphatidylcholine) using aromatic rich region and adjacent phosphocholine (POC) binding site, firm binding to the membrane (mainly driven by hydrophobic interactions) accompanied by the transfer of the N-terminal region to the lipid-water interface and finally pore formation after oligomerization of monomers. Cytolytic effects include red blood cells hemolysis, platelet aggregation and lysis, cytotoxic and cytostatic effects on fibroblasts. Lethality in mammals has been ascribed to severe vasospasm of coronary vessels, cardiac arrhythmia, and inotropic effects. The chain is DELTA-actitoxin-Oor1b from Oulactis orientalis (Japan anemone).